The chain runs to 247 residues: 5'-nucleotidase SurE (247 aa).

A divalent metal cation-binding residues include Asp-8, Asp-9, Ser-39, and Asn-95.

This sequence belongs to the SurE nucleotidase family. A divalent metal cation is required as a cofactor.

The protein localises to the cytoplasm. The enzyme catalyses a ribonucleoside 5'-phosphate + H2O = a ribonucleoside + phosphate. Nucleotidase that shows phosphatase activity on nucleoside 5'-monophosphates. The polypeptide is 5'-nucleotidase SurE (Thermotoga petrophila (strain ATCC BAA-488 / DSM 13995 / JCM 10881 / RKU-1)).